Consider the following 510-residue polypeptide: 2,3-bisphosphoglycerate-independent phosphoglycerate mutase (510 aa).

Mn(2+) is bound by residues aspartate 12 and serine 62. Serine 62 (phosphoserine intermediate) is an active-site residue. Substrate-binding positions include histidine 123, 153–154, arginine 185, arginine 191, 261–264, and lysine 336; these read RD and RPDR. Residues aspartate 403, histidine 407, aspartate 444, histidine 445, and histidine 462 each contribute to the Mn(2+) site.

This sequence belongs to the BPG-independent phosphoglycerate mutase family. As to quaternary structure, monomer. Requires Mn(2+) as cofactor.

The catalysed reaction is (2R)-2-phosphoglycerate = (2R)-3-phosphoglycerate. It functions in the pathway carbohydrate degradation; glycolysis; pyruvate from D-glyceraldehyde 3-phosphate: step 3/5. Functionally, essential for rapid growth and for sporulation. Catalyzes the interconversion of 2-phosphoglycerate and 3-phosphoglycerate. In Priestia megaterium (strain ATCC 12872 / QMB1551) (Bacillus megaterium), this protein is 2,3-bisphosphoglycerate-independent phosphoglycerate mutase.